The primary structure comprises 305 residues: Aspartate carbamoyltransferase catalytic subunit (305 aa).

Carbamoyl phosphate contacts are provided by R56 and T57. Residue K84 participates in L-aspartate binding. Residues R106, H136, and Q139 each coordinate carbamoyl phosphate. L-aspartate-binding residues include R169 and R221. Carbamoyl phosphate is bound by residues A262 and P263.

This sequence belongs to the aspartate/ornithine carbamoyltransferase superfamily. ATCase family. Heterododecamer (2C3:3R2) of six catalytic PyrB chains organized as two trimers (C3), and six regulatory PyrI chains organized as three dimers (R2).

The catalysed reaction is carbamoyl phosphate + L-aspartate = N-carbamoyl-L-aspartate + phosphate + H(+). The protein operates within pyrimidine metabolism; UMP biosynthesis via de novo pathway; (S)-dihydroorotate from bicarbonate: step 2/3. Its function is as follows. Catalyzes the condensation of carbamoyl phosphate and aspartate to form carbamoyl aspartate and inorganic phosphate, the committed step in the de novo pyrimidine nucleotide biosynthesis pathway. The chain is Aspartate carbamoyltransferase catalytic subunit from Streptococcus sanguinis (strain SK36).